The sequence spans 568 residues: Peroxisomal leader peptide-processing protease (568 aa).

Residues 332 to 568 form a serine protease region; it reads TPRGLPLRDL…PLSEVPRSKL (237 aa). Active-site charge relay system residues include His-374, Asp-410, and Ser-483.

This sequence belongs to the peptidase S1B family. In terms of assembly, homodimer. Forms a heterodimer with the C-terminal cleavage product (49 kDa form). Forms a heterodimer with the N-terminal cleavage product (10 kDa form). Interacts with PEX5. Interacts with LONP2. In terms of processing, self-cleavage gives rise to an N-terminal 10-kDa fragment and C-terminal 49-kDa fragment upon import into the peroxisomes. The full-lengh TYSND1 is the active the proteolytic processing of PTS1- and PTS2-proteins and in self-cleavage, and intermolecular self-cleavage of TYSND1 down-regulates its protease activity.

Its subcellular location is the peroxisome. With respect to regulation, inhibited by N-ethylmaleimide (NEM). Not affected by leupeptin or trans-epoxysuccinyl-l-leucylamido-(4-gianidino) butane (E64). Peroxisomal protease that mediates both the removal of the leader peptide from proteins containing a PTS2 target sequence and processes several PTS1-containing proteins. Catalyzes the processing of PTS1-proteins involved in the peroxisomal beta-oxidation of fatty acids. The chain is Peroxisomal leader peptide-processing protease (Tysnd1) from Mus musculus (Mouse).